Consider the following 255-residue polypeptide: Spectinomycin 9-adenylyltransferase (255 aa).

The catalysed reaction is spectinomycin + ATP = 9-O-adenylylspectinomycin + diphosphate. In terms of biological role, mediates bacterial resistance to the antibiotic spectinomycin but not streptomycin. The chain is Spectinomycin 9-adenylyltransferase from Enterococcus faecalis (Streptococcus faecalis).